The chain runs to 119 residues: Acidic phospholipase A2 DE-II (119 aa).

Intrachain disulfides connect Cys-11/Cys-72, Cys-26/Cys-118, Cys-28/Cys-44, Cys-43/Cys-99, Cys-50/Cys-92, Cys-60/Cys-85, and Cys-79/Cys-90. Ca(2+) contacts are provided by Tyr-27, Gly-29, and Gly-31. His-47 is a catalytic residue. Asp-48 provides a ligand contact to Ca(2+). Residue Asp-93 is part of the active site.

It belongs to the phospholipase A2 family. Group I subfamily. D49 sub-subfamily. The cofactor is Ca(2+). Expressed by the venom gland.

Its subcellular location is the secreted. It catalyses the reaction a 1,2-diacyl-sn-glycero-3-phosphocholine + H2O = a 1-acyl-sn-glycero-3-phosphocholine + a fatty acid + H(+). Its function is as follows. PLA2 catalyzes the calcium-dependent hydrolysis of the 2-acyl groups in 3-sn-phosphoglycerides. In Naja melanoleuca (Forest cobra), this protein is Acidic phospholipase A2 DE-II.